We begin with the raw amino-acid sequence, 243 residues long: Ribosomal RNA small subunit methyltransferase E 2 (243 aa).

The protein belongs to the RNA methyltransferase RsmE family.

It is found in the cytoplasm. It catalyses the reaction uridine(1498) in 16S rRNA + S-adenosyl-L-methionine = N(3)-methyluridine(1498) in 16S rRNA + S-adenosyl-L-homocysteine + H(+). In terms of biological role, specifically methylates the N3 position of the uracil ring of uridine 1498 (m3U1498) in 16S rRNA. Acts on the fully assembled 30S ribosomal subunit. In Borreliella burgdorferi (strain ATCC 35210 / DSM 4680 / CIP 102532 / B31) (Borrelia burgdorferi), this protein is Ribosomal RNA small subunit methyltransferase E 2 (rsmE2).